The primary structure comprises 274 residues: Proteasome subunit beta type-7-B (274 aa).

A propeptide spans 1 to 37 (removed in mature form); sequence MSQSSVDIPPKGGFSFDLCKRNDMLTQKGLKAPSFLK. T40 functions as the Nucleophile in the catalytic mechanism.

Belongs to the peptidase T1B family. As to quaternary structure, component of the 20S core complex of the 26S proteasome. The 26S proteasome is composed of a core protease (CP), known as the 20S proteasome, capped at one or both ends by the 19S regulatory particle (RP/PA700). The 20S proteasome core is composed of 28 subunits that are arranged in four stacked rings, resulting in a barrel-shaped structure. The two end rings are each formed by seven alpha subunits, and the two central rings are each formed by seven beta subunits. The catalytic chamber with the active sites is on the inside of the barrel.

The protein resides in the cytoplasm. Its subcellular location is the nucleus. It carries out the reaction Cleavage of peptide bonds with very broad specificity.. Functionally, the proteasome is a multicatalytic proteinase complex which is characterized by its ability to cleave peptides with Arg, Phe, Tyr, Leu, and Glu adjacent to the leaving group at neutral or slightly basic pH. The proteasome has an ATP-dependent proteolytic activity. This is Proteasome subunit beta type-7-B (PBB2) from Arabidopsis thaliana (Mouse-ear cress).